Consider the following 317-residue polypeptide: Serine/threonine-protein phosphatase PP1 isozyme 1 (317 aa).

Positions 75, 77, 103, and 135 each coordinate Mn(2+). The Proton donor role is filled by His-136. 2 residues coordinate Mn(2+): His-184 and His-259.

This sequence belongs to the PPP phosphatase family. PP-1 subfamily. It depends on Mn(2+) as a cofactor.

The enzyme catalyses O-phospho-L-seryl-[protein] + H2O = L-seryl-[protein] + phosphate. The catalysed reaction is O-phospho-L-threonyl-[protein] + H2O = L-threonyl-[protein] + phosphate. The polypeptide is Serine/threonine-protein phosphatase PP1 isozyme 1 (NPP1) (Nicotiana tabacum (Common tobacco)).